A 356-amino-acid polypeptide reads, in one-letter code: L-Ala-D/L-Glu epimerase (356 aa).

161–163 (KVK) serves as a coordination point for substrate. Residues Asp-191, Glu-219, and Asp-244 each coordinate Mg(2+). Substrate is bound by residues Lys-268 and 320 to 322 (DLD).

The protein belongs to the mandelate racemase/muconate lactonizing enzyme family. It depends on Mg(2+) as a cofactor.

It carries out the reaction L-alanyl-L-glutamate = L-alanyl-D-glutamate. In terms of biological role, dipeptide epimerase with a preference for substrates containing a Glu residue in the second position. Catalyzes the epimerization of L-Ala-L-Glu, L-Ser-L-Glu, L-Thr-L-Glu, L-Val-L-Glu, L-Gly-L-Glu and L-Thr-L-Glu (in vitro). May play a role in the metabolism of the murein peptide, of which L-Ala-D-Glu is a component. The sequence is that of L-Ala-D/L-Glu epimerase from Francisella tularensis subsp. novicida (strain U112).